Reading from the N-terminus, the 237-residue chain is Phosphoribosylaminoimidazole-succinocarboxamide synthase (237 aa).

The protein belongs to the SAICAR synthetase family.

The catalysed reaction is 5-amino-1-(5-phospho-D-ribosyl)imidazole-4-carboxylate + L-aspartate + ATP = (2S)-2-[5-amino-1-(5-phospho-beta-D-ribosyl)imidazole-4-carboxamido]succinate + ADP + phosphate + 2 H(+). The protein operates within purine metabolism; IMP biosynthesis via de novo pathway; 5-amino-1-(5-phospho-D-ribosyl)imidazole-4-carboxamide from 5-amino-1-(5-phospho-D-ribosyl)imidazole-4-carboxylate: step 1/2. In Listeria welshimeri serovar 6b (strain ATCC 35897 / DSM 20650 / CCUG 15529 / CIP 8149 / NCTC 11857 / SLCC 5334 / V8), this protein is Phosphoribosylaminoimidazole-succinocarboxamide synthase.